Consider the following 299-residue polypeptide: Muscleblind-like protein (299 aa).

2 consecutive C3H1-type zinc fingers follow at residues 38 to 66 (WLQVEVCREFLRGQCARSDQECKFAHPPP) and 72 to 100 (QGRVTACYDSIKGRCTRENPKCKYLHPPQ).

This sequence belongs to the muscleblind family.

It is found in the nucleus. Functionally, binds to RNA with repeat sequences CUG and CCUG. In Caenorhabditis briggsae, this protein is Muscleblind-like protein.